The sequence spans 1052 residues: uncharacterized protein (1052 aa).

The Helicase ATP-binding domain occupies 389–561 (WINKGKTFAI…NKGGNYIMIN (173 aa)). 400-407 (SAMGTGKT) contacts ATP.

This sequence belongs to the mimivirus R1 family.

This is an uncharacterized protein from Acanthamoeba polyphaga mimivirus (APMV).